A 419-amino-acid chain; its full sequence is Enolase (419 aa).

Q161 is a binding site for (2R)-2-phosphoglycerate. E205 serves as the catalytic Proton donor. Mg(2+) contacts are provided by D240, E283, and D309. Positions 334, 363, 364, and 385 each coordinate (2R)-2-phosphoglycerate. K334 serves as the catalytic Proton acceptor.

It belongs to the enolase family. Mg(2+) serves as cofactor.

The protein localises to the cytoplasm. The protein resides in the secreted. Its subcellular location is the cell surface. The catalysed reaction is (2R)-2-phosphoglycerate = phosphoenolpyruvate + H2O. The protein operates within carbohydrate degradation; glycolysis; pyruvate from D-glyceraldehyde 3-phosphate: step 4/5. In terms of biological role, catalyzes the reversible conversion of 2-phosphoglycerate (2-PG) into phosphoenolpyruvate (PEP). It is essential for the degradation of carbohydrates via glycolysis. In Saccharolobus islandicus (strain Y.G.57.14 / Yellowstone #1) (Sulfolobus islandicus), this protein is Enolase.